The sequence spans 134 residues: Large ribosomal subunit protein uL22 (134 aa).

Belongs to the universal ribosomal protein uL22 family. As to quaternary structure, part of the 50S ribosomal subunit. Contacts protein L32.

This protein binds specifically to 23S rRNA; its binding is stimulated by other ribosomal proteins, e.g. L4, L17, and L20. It is important during the early stages of 50S assembly. It makes multiple contacts with different domains of the 23S rRNA in the assembled 50S subunit and ribosome. In terms of biological role, the globular domain of the protein is located by the polypeptide exit tunnel on the outside of the subunit while an extended beta-hairpin forms part of the wall of the tunnel. Forms a pair of 'tweezers' with L32 that hold together two different domains of the 23S rRNA. Interacts with the tunnel-blocking modified macrolide azithromycin. Upon binding of the macrolide troleadomycin to the ribosome, the tip of the beta-hairpin is displaced, which severely restricts the tunnel. This and experiments in E.coli have led to the suggestion that it is part of the gating mechanism involved in translation arrest in the absence of the protein export system. The protein is Large ribosomal subunit protein uL22 (rplV) of Deinococcus radiodurans (strain ATCC 13939 / DSM 20539 / JCM 16871 / CCUG 27074 / LMG 4051 / NBRC 15346 / NCIMB 9279 / VKM B-1422 / R1).